The primary structure comprises 65 residues: Beta-defensin 106A (65 aa).

Residues 1 to 20 form the signal peptide; that stretch reads MRTFLFLFVVLFFLTPAKNA. 3 disulfides stabilise this stretch: cysteine 26/cysteine 53, cysteine 33/cysteine 47, and cysteine 37/cysteine 54.

The protein belongs to the beta-defensin family. In terms of assembly, monomer. Interacts with CCR2 (via extracellular N-terminal region); this interaction may preferentially require specific tyrosine sulfation on CCR2.

It localises to the secreted. Its subcellular location is the membrane. Its function is as follows. Has antibacterial activity. Acts as a ligand for C-C chemokine receptor CCR2. The chain is Beta-defensin 106A (DEFB106A) from Hylobates lar (Lar gibbon).